The sequence spans 138 residues: MTQMTVQVVTPDGIKYDHHAKCISVTTPDGEMGILPNHINLIAPLQVHEMKIRRGGEDEKVDWIAINGGIIEIKDNVVTIVADSAERDRDIDVSRAERAKLRAEREIAQAETTHNIDEVRRAKVALRRALNRINVSKK.

The protein belongs to the ATPase epsilon chain family. F-type ATPases have 2 components, CF(1) - the catalytic core - and CF(0) - the membrane proton channel. CF(1) has five subunits: alpha(3), beta(3), gamma(1), delta(1), epsilon(1). CF(0) has three main subunits: a, b and c.

The protein localises to the cell membrane. In terms of biological role, produces ATP from ADP in the presence of a proton gradient across the membrane. This is ATP synthase epsilon chain from Streptococcus pyogenes serotype M2 (strain MGAS10270).